Here is a 556-residue protein sequence, read N- to C-terminus: Formate--tetrahydrofolate ligase (556 aa).

65-72 (TPAGEGKS) is an ATP binding site.

The protein belongs to the formate--tetrahydrofolate ligase family.

It carries out the reaction (6S)-5,6,7,8-tetrahydrofolate + formate + ATP = (6R)-10-formyltetrahydrofolate + ADP + phosphate. Its pathway is one-carbon metabolism; tetrahydrofolate interconversion. This is Formate--tetrahydrofolate ligase from Enterococcus faecalis (strain ATCC 700802 / V583).